A 196-amino-acid polypeptide reads, in one-letter code: MSRYRGPRFKKIRRLGTLPGLTSKRPRSGSDLKNPLRSVKRSQYRIRLEEKQKLRFHYGLTERQLLRYVHIAGKAKGSTGQVLLQLLEMRLDNILFRLGMASTIPGARQLVNHRHILVNGRIVDIPSYRCKPRDIITTKDKQRSKALIQNYIASSPHEELPNHLTIDSFQYKGLVNQIIDSKWIGLKINELLVVEY.

A disordered region spans residues 15–36; sequence LGTLPGLTSKRPRSGSDLKNPL. The 62-residue stretch at 89-150 folds into the S4 RNA-binding domain; sequence MRLDNILFRL…KQRSKALIQN (62 aa).

It belongs to the universal ribosomal protein uS4 family. As to quaternary structure, part of the 30S ribosomal subunit. Contacts protein S5. The interaction surface between S4 and S5 is involved in control of translational fidelity.

The protein resides in the plastid. The protein localises to the chloroplast. One of the primary rRNA binding proteins, it binds directly to 16S rRNA where it nucleates assembly of the body of the 30S subunit. Functionally, with S5 and S12 plays an important role in translational accuracy. The polypeptide is Small ribosomal subunit protein uS4c (rps4) (Yucca filamentosa (Bear-grass)).